The following is a 145-amino-acid chain: D-aminoacyl-tRNA deacylase (145 aa).

The Gly-cisPro motif, important for rejection of L-amino acids motif lies at 137–138 (GP).

It belongs to the DTD family. Homodimer.

The protein resides in the cytoplasm. The enzyme catalyses glycyl-tRNA(Ala) + H2O = tRNA(Ala) + glycine + H(+). It catalyses the reaction a D-aminoacyl-tRNA + H2O = a tRNA + a D-alpha-amino acid + H(+). Functionally, an aminoacyl-tRNA editing enzyme that deacylates mischarged D-aminoacyl-tRNAs. Also deacylates mischarged glycyl-tRNA(Ala), protecting cells against glycine mischarging by AlaRS. Acts via tRNA-based rather than protein-based catalysis; rejects L-amino acids rather than detecting D-amino acids in the active site. By recycling D-aminoacyl-tRNA to D-amino acids and free tRNA molecules, this enzyme counteracts the toxicity associated with the formation of D-aminoacyl-tRNA entities in vivo and helps enforce protein L-homochirality. The polypeptide is D-aminoacyl-tRNA deacylase (Rhodococcus jostii (strain RHA1)).